A 327-amino-acid polypeptide reads, in one-letter code: tRNA-modifying protein YgfZ (327 aa).

The folate site is built by W27 and W189.

This sequence belongs to the tRNA-modifying YgfZ family.

It localises to the cytoplasm. In terms of biological role, folate-binding protein involved in regulating the level of ATP-DnaA and in the modification of some tRNAs. It is probably a key factor in regulatory networks that act via tRNA modification, such as initiation of chromosomal replication. The protein is tRNA-modifying protein YgfZ of Klebsiella pneumoniae (strain 342).